Consider the following 1339-residue polypeptide: DNA polymerase alpha catalytic subunit (1339 aa).

Disordered regions lie at residues 1–90 and 177–203; these read MSGG…SMSD and NVERDQSAKPPRPRPTPGAGGGAGYRN. A compositionally biased stretch (basic and acidic residues) spans 27 to 36; sequence DQWRSLREEV. The segment covering 79–89 has biased composition (polar residues); that stretch reads PKQQTLAQSMS. Residues cysteine 1179, cysteine 1182, cysteine 1213, cysteine 1216, cysteine 1233, cysteine 1243, cysteine 1271, and cysteine 1286 each coordinate Zn(2+). The segment at 1179–1216 adopts a CysA-type zinc-finger fold; sequence CTHCRLMTPINPHTRVMEVLADQERQRDRFDLYVCVSC. The CysB motif signature appears at 1243-1271; it reads CGSAAAVKAVRTQFTYYRALFDVPHAPGC.

Belongs to the DNA polymerase type-B family.

Its subcellular location is the nucleus. The enzyme catalyses DNA(n) + a 2'-deoxyribonucleoside 5'-triphosphate = DNA(n+1) + diphosphate. Its function is as follows. Polymerase alpha in a complex with DNA primase is a replicative polymerase. The polypeptide is DNA polymerase alpha catalytic subunit (Leishmania donovani).